A 1124-amino-acid chain; its full sequence is Eukaryotic translation initiation factor 3 subunit A (1124 aa).

Positions 96–124 (LKMAEERTEQAQQQSSQATVDIDDLDNLA) form a coiled coil. One can recognise a PCI domain in the interval 317 to 498 (IQRMTTHVLI…ECVHFGTDLS (182 aa)). 2 stretches are compositionally biased toward basic and acidic residues: residues 812–851 (EERR…RQLA) and 860–883 (EVER…ERRP). A disordered region spans residues 812 to 1124 (EERRRIEEEL…EEGWTDVKHR (313 aa)). Low complexity predominate over residues 900–910 (PAAAAPANPAA). Basic and acidic residues-rich tracts occupy residues 928–952 (PRER…EKDG), 960–990 (RGGD…DRGP), 1007–1048 (PRRD…RGGG), and 1063–1100 (DDNR…EARP).

It belongs to the eIF-3 subunit A family. In terms of assembly, component of the eukaryotic translation initiation factor 3 (eIF-3) complex.

The protein localises to the cytoplasm. In terms of biological role, RNA-binding component of the eukaryotic translation initiation factor 3 (eIF-3) complex, which is involved in protein synthesis of a specialized repertoire of mRNAs and, together with other initiation factors, stimulates binding of mRNA and methionyl-tRNAi to the 40S ribosome. The eIF-3 complex specifically targets and initiates translation of a subset of mRNAs involved in cell proliferation. This Anopheles gambiae (African malaria mosquito) protein is Eukaryotic translation initiation factor 3 subunit A.